A 209-amino-acid chain; its full sequence is Protein phosphotransferase ChpT (209 aa).

A Phosphohistidine modification is found at histidine 22.

It belongs to the ChpT phosphotransferase family. Homodimer. Forms an asymmetric heterotetramer with CtrA (2:2). There are at least two modes of interaction between ChpT and CtrA, only one of which is competent to catalyze His-Asp phosphoryl transfer. Is phosphorylated by CckA-P on His-22.

It is found in the cytoplasm. Its function is as follows. Component of a regulatory phosphorelay system that controls B.abortus cell growth, division, and intracellular survival inside mammalian host cells. This signaling pathway is composed of CckA, ChpT, CtrA and CpdR. ChpT efficiently and specifically shuttles phosphoryl groups from the CckA kinase to the receiver domains of both CtrA and CpdR. Does not bind ATP. Overexpression of chpT results in a defect in cell morphology, DNA content, and intracellular survival in human macrophages. The chain is Protein phosphotransferase ChpT from Brucella abortus (strain 2308).